The primary structure comprises 362 residues: Mannan endo-1,4-beta-mannosidase (362 aa).

Positions 1-26 (MFKKHTISLLIIFLLASAVLAKPIEA) are cleaved as a signal peptide. Residues 38 to 349 (QTTKTVMNWL…YHDSWTLNKG (312 aa)) enclose the GH26 domain. Residue His131 coordinates substrate. Glu193 (proton donor) is an active-site residue. Substrate is bound by residues Trp198 and Tyr268. Glu292 functions as the Nucleophile in the catalytic mechanism. Position 324-325 (324-325 (WN)) interacts with substrate.

The protein belongs to the glycosyl hydrolase 26 family. In terms of assembly, homodimer.

It is found in the secreted. The enzyme catalyses Random hydrolysis of (1-&gt;4)-beta-D-mannosidic linkages in mannans, galactomannans and glucomannans.. Its function is as follows. Involved in the degradation of glucomannan. Catalyzes the endo hydrolysis of beta-1,4-linked mannan, galactomannan and glucomannan. In Bacillus subtilis (strain 168), this protein is Mannan endo-1,4-beta-mannosidase.